Reading from the N-terminus, the 324-residue chain is Kelch domain-containing protein PF0436 (324 aa).

Kelch repeat units lie at residues 112–160 (EVLL…LWDG), 254–301 (GIYI…WDGR), and 303–323 (IYIV…FTPK).

This is Kelch domain-containing protein PF0436 from Pyrococcus furiosus (strain ATCC 43587 / DSM 3638 / JCM 8422 / Vc1).